Consider the following 219-residue polypeptide: Adenylate kinase (219 aa).

10 to 15 (GAGKGT) is an ATP binding site. The segment at 30–59 (STGDMLRVAVKVGTPLGIEAKKIMDSGGLV) is NMP. Residues threonine 31, arginine 36, 57–59 (GLV), 85–88 (GFPR), and glutamine 92 contribute to the AMP site. The LID stretch occupies residues 122 to 159 (GRRTHLKSGRTYHITYNQPKVEGIDDITGEKLVQRSDD). ATP contacts are provided by residues arginine 123 and 132 to 133 (TY). Arginine 156 and arginine 167 together coordinate AMP. Glycine 202 contributes to the ATP binding site.

This sequence belongs to the adenylate kinase family. Monomer.

The protein localises to the cytoplasm. It carries out the reaction AMP + ATP = 2 ADP. The protein operates within purine metabolism; AMP biosynthesis via salvage pathway; AMP from ADP: step 1/1. In terms of biological role, catalyzes the reversible transfer of the terminal phosphate group between ATP and AMP. Plays an important role in cellular energy homeostasis and in adenine nucleotide metabolism. The protein is Adenylate kinase of Vesicomyosocius okutanii subsp. Calyptogena okutanii (strain HA).